The following is a 316-amino-acid chain: Cysteine synthase (316 aa).

Positions 7 and 35 each coordinate hydrogen sulfide. N6-(pyridoxal phosphate)lysine is present on K42. Pyridoxal 5'-phosphate is bound by residues N72 and 177–181 (GTGGS). L268 contributes to the hydrogen sulfide binding site. Position 272 (S272) interacts with pyridoxal 5'-phosphate.

The protein belongs to the cysteine synthase/cystathionine beta-synthase family. As to quaternary structure, homodimer. Pyridoxal 5'-phosphate serves as cofactor.

The enzyme catalyses O-acetyl-L-serine + hydrogen sulfide = L-cysteine + acetate. It participates in amino-acid biosynthesis; L-cysteine biosynthesis; L-cysteine from L-serine: step 2/2. This Haemophilus influenzae (strain ATCC 51907 / DSM 11121 / KW20 / Rd) protein is Cysteine synthase (cysK).